The chain runs to 298 residues: Inosose dehydratase (298 aa).

This sequence belongs to the IolE/MocC family. Requires glutathione as cofactor. The cofactor is Co(2+). Mn(2+) is required as a cofactor.

It carries out the reaction scyllo-inosose = 3D-3,5/4-trihydroxycyclohexane-1,2-dione + H2O. Its function is as follows. Catalyzes the dehydration of inosose (2-keto-myo-inositol, 2KMI or 2,4,6/3,5-pentahydroxycyclohexanone) to 3D-(3,5/4)-trihydroxycyclohexane-1,2-dione (D-2,3-diketo-4-deoxy-epi-inositol). This is Inosose dehydratase from Serratia proteamaculans (strain 568).